A 262-amino-acid polypeptide reads, in one-letter code: Phosphonates import ATP-binding protein PhnC (262 aa).

One can recognise an ABC transporter domain in the interval 5–253; that stretch reads IRVEKLAKTF…RFDHLYRSIN (249 aa). 37-44 lines the ATP pocket; it reads GPSGSGKS.

The protein belongs to the ABC transporter superfamily. Phosphonates importer (TC 3.A.1.9.1) family. The complex is composed of two ATP-binding proteins (PhnC), two transmembrane proteins (PhnE) and a solute-binding protein (PhnD).

It is found in the cell inner membrane. It carries out the reaction phosphonate(out) + ATP + H2O = phosphonate(in) + ADP + phosphate + H(+). In terms of biological role, part of the ABC transporter complex PhnCDE involved in phosphonates import. Responsible for energy coupling to the transport system. This is Phosphonates import ATP-binding protein PhnC from Escherichia coli (strain UTI89 / UPEC).